Consider the following 118-residue polypeptide: Iron-sulfur cluster insertion protein ErpA (118 aa).

Iron-sulfur cluster is bound by residues Cys46, Cys110, and Cys112.

It belongs to the HesB/IscA family. In terms of assembly, homodimer. The cofactor is iron-sulfur cluster.

In terms of biological role, required for insertion of 4Fe-4S clusters for at least IspG. The chain is Iron-sulfur cluster insertion protein ErpA from Psychromonas ingrahamii (strain DSM 17664 / CCUG 51855 / 37).